Consider the following 336-residue polypeptide: Holliday junction branch migration complex subunit RuvB (336 aa).

A large ATPase domain (RuvB-L) region spans residues 1 to 182 (MKERIVNLET…FGMSFRMQFY (182 aa)). Residues Leu21, Arg22, Gly63, Lys66, Thr67, Ser68, 129–131 (EDF), Arg172, Tyr182, and Arg219 each bind ATP. Thr67 is a binding site for Mg(2+). The segment at 183 to 253 (SPSELSLIIK…ITLHALNELG (71 aa)) is small ATPAse domain (RuvB-S). The head domain (RuvB-H) stretch occupies residues 256 to 336 (ELGFDEADLA…IPTLNPQTLF (81 aa)). Positions 310 and 315 each coordinate DNA.

The protein belongs to the RuvB family. As to quaternary structure, homohexamer. Forms an RuvA(8)-RuvB(12)-Holliday junction (HJ) complex. HJ DNA is sandwiched between 2 RuvA tetramers; dsDNA enters through RuvA and exits via RuvB. An RuvB hexamer assembles on each DNA strand where it exits the tetramer. Each RuvB hexamer is contacted by two RuvA subunits (via domain III) on 2 adjacent RuvB subunits; this complex drives branch migration. In the full resolvosome a probable DNA-RuvA(4)-RuvB(12)-RuvC(2) complex forms which resolves the HJ.

The protein resides in the cytoplasm. It catalyses the reaction ATP + H2O = ADP + phosphate + H(+). Functionally, the RuvA-RuvB-RuvC complex processes Holliday junction (HJ) DNA during genetic recombination and DNA repair, while the RuvA-RuvB complex plays an important role in the rescue of blocked DNA replication forks via replication fork reversal (RFR). RuvA specifically binds to HJ cruciform DNA, conferring on it an open structure. The RuvB hexamer acts as an ATP-dependent pump, pulling dsDNA into and through the RuvAB complex. RuvB forms 2 homohexamers on either side of HJ DNA bound by 1 or 2 RuvA tetramers; 4 subunits per hexamer contact DNA at a time. Coordinated motions by a converter formed by DNA-disengaged RuvB subunits stimulates ATP hydrolysis and nucleotide exchange. Immobilization of the converter enables RuvB to convert the ATP-contained energy into a lever motion, pulling 2 nucleotides of DNA out of the RuvA tetramer per ATP hydrolyzed, thus driving DNA branch migration. The RuvB motors rotate together with the DNA substrate, which together with the progressing nucleotide cycle form the mechanistic basis for DNA recombination by continuous HJ branch migration. Branch migration allows RuvC to scan DNA until it finds its consensus sequence, where it cleaves and resolves cruciform DNA. The chain is Holliday junction branch migration complex subunit RuvB from Helicobacter pylori (strain P12).